Consider the following 113-residue polypeptide: Transcriptional activator RamA (113 aa).

Positions 9–107 (DTIVEWIDDN…HQPPGAYRKE (99 aa)) constitute an HTH araC/xylS-type domain. 2 DNA-binding regions (H-T-H motif) span residues 26–47 (EDIARHAGYSKWHLQRLFLQYK) and 74–97 (VYEICLRYGFESQQTFTRIFTRTF).

Its function is as follows. Probable transcriptional activator. The chain is Transcriptional activator RamA (ramA) from Enterobacter cloacae.